The primary structure comprises 247 residues: Putative trypsin-6 (247 aa).

The signal sequence occupies residues 1 to 15 (MNPLLILAFVGAAVA). The 221-residue stretch at 24–244 (IVGGYTCEEN…YVDWIKDTIA (221 aa)) folds into the Peptidase S1 domain. A disulfide bridge links Cys-48 with Cys-64. His-63 serves as the catalytic Charge relay system. Ca(2+) contacts are provided by Glu-75, Asn-77, Val-80, and Glu-85. Asp-107 (charge relay system) is an active-site residue. 3 disulfides stabilise this stretch: Cys-139–Cys-206, Cys-171–Cys-185, and Cys-196–Cys-220. The active-site Charge relay system is the Ser-200.

Belongs to the peptidase S1 family. Tryptase subfamily. As to expression, overexpressed in metastasing in non small cell lung tumors, leading to an enhanced cell migration.

Its subcellular location is the secreted. The enzyme catalyses Preferential cleavage: Arg-|-Xaa, Lys-|-Xaa.. In terms of biological role, may regulate cell migration. This Homo sapiens (Human) protein is Putative trypsin-6 (PRSS3P2).